We begin with the raw amino-acid sequence, 423 residues long: Phospholipase A1-IIalpha (423 aa).

The stretch at 194 to 217 (SAQEQVQGELKRLLELYKDEEISI) forms a coiled coil. S223 functions as the Acyl-ester intermediate in the catalytic mechanism. Active-site charge relay system residues include S223, D290, and H327. The interval 399 to 423 (HDDDVDADDNDDSSTSNQLQELNTD) is disordered. Acidic residues predominate over residues 401 to 410 (DDVDADDNDD). The segment covering 411–423 (SSTSNQLQELNTD) has biased composition (polar residues).

This sequence belongs to the AB hydrolase superfamily. Lipase family.

It is found in the cytoplasm. Acylhydrolase that catalyzes the hydrolysis of phospholipids at the sn-1 position. This Arabidopsis thaliana (Mouse-ear cress) protein is Phospholipase A1-IIalpha.